The primary structure comprises 304 residues: Putative S-adenosyl-L-methionine-dependent methyltransferase MAP_3385 (304 aa).

S-adenosyl-L-methionine is bound by residues D129 and 158–159 (DL).

This sequence belongs to the UPF0677 family.

In terms of biological role, exhibits S-adenosyl-L-methionine-dependent methyltransferase activity. The polypeptide is Putative S-adenosyl-L-methionine-dependent methyltransferase MAP_3385 (Mycolicibacterium paratuberculosis (strain ATCC BAA-968 / K-10) (Mycobacterium paratuberculosis)).